The chain runs to 303 residues: Probable cell division protein WhiA (303 aa).

The H-T-H motif DNA-binding region spans 272-303; the sequence is SIQQLADSLSTPLTKSGVNHRLRKINKIADEL.

Belongs to the WhiA family.

Functionally, involved in cell division and chromosome segregation. The polypeptide is Probable cell division protein WhiA (Streptococcus pneumoniae (strain ATCC 700669 / Spain 23F-1)).